The sequence spans 255 residues: Triosephosphate isomerase (255 aa).

9-11 (NWK) provides a ligand contact to substrate. Residue His95 is the Electrophile of the active site. Glu167 functions as the Proton acceptor in the catalytic mechanism. Substrate is bound by residues Gly173, Ser212, and 233-234 (GG).

The protein belongs to the triosephosphate isomerase family. In terms of assembly, homodimer.

The protein resides in the cytoplasm. The catalysed reaction is D-glyceraldehyde 3-phosphate = dihydroxyacetone phosphate. Its pathway is carbohydrate biosynthesis; gluconeogenesis. It functions in the pathway carbohydrate degradation; glycolysis; D-glyceraldehyde 3-phosphate from glycerone phosphate: step 1/1. Functionally, involved in the gluconeogenesis. Catalyzes stereospecifically the conversion of dihydroxyacetone phosphate (DHAP) to D-glyceraldehyde-3-phosphate (G3P). This is Triosephosphate isomerase from Erwinia tasmaniensis (strain DSM 17950 / CFBP 7177 / CIP 109463 / NCPPB 4357 / Et1/99).